A 134-amino-acid chain; its full sequence is Small ribosomal subunit protein uS8c (134 aa).

It belongs to the universal ribosomal protein uS8 family. In terms of assembly, part of the 30S ribosomal subunit.

It is found in the plastid. The protein localises to the chloroplast. Its function is as follows. One of the primary rRNA binding proteins, it binds directly to 16S rRNA central domain where it helps coordinate assembly of the platform of the 30S subunit. This is Small ribosomal subunit protein uS8c (rps8) from Ipomoea purpurea (Common morning glory).